A 710-amino-acid polypeptide reads, in one-letter code: Dynein axonemal assembly factor 3 homolog (710 aa).

The segment at 403-487 (GAEAGAGAGP…DSDPAAAAST (85 aa)) is disordered. Positions 404–416 (AEAGAGAGPGGEA) are enriched in gly residues. Residues 417–438 (AAGASSSSGKEEAAAAAAAGKE) are compositionally biased toward low complexity. The span at 453–462 (SGSGAPGAGT) shows a compositional bias: gly residues. Residues 478–487 (DSDPAAAAST) show a composition bias toward low complexity.

The protein belongs to the DNAAF3 family.

It localises to the cytoplasm. Functionally, required for the assembly of axonemal inner and outer dynein arms. Involved in preassembly of dyneins into complexes before their transport into cilia. This is Dynein axonemal assembly factor 3 homolog (DAB1) from Chlamydomonas reinhardtii (Chlamydomonas smithii).